The primary structure comprises 187 residues: UPF0301 protein YqgE (187 aa).

This sequence belongs to the UPF0301 (AlgH) family.

In Salmonella paratyphi B (strain ATCC BAA-1250 / SPB7), this protein is UPF0301 protein YqgE.